A 526-amino-acid polypeptide reads, in one-letter code: Peptide chain release factor 3 (526 aa).

The region spanning 9–277 is the tr-type G domain; it reads DKRRTFAIIS…GIVEWAPKPL (269 aa). GTP-binding positions include 18–25, 86–90, and 140–143; these read SHPDAGKT, DTPGH, and NKLD.

It belongs to the TRAFAC class translation factor GTPase superfamily. Classic translation factor GTPase family. PrfC subfamily.

Its subcellular location is the cytoplasm. Increases the formation of ribosomal termination complexes and stimulates activities of RF-1 and RF-2. It binds guanine nucleotides and has strong preference for UGA stop codons. It may interact directly with the ribosome. The stimulation of RF-1 and RF-2 is significantly reduced by GTP and GDP, but not by GMP. This chain is Peptide chain release factor 3, found in Shewanella baltica (strain OS223).